We begin with the raw amino-acid sequence, 356 residues long: Alternative oxidase, mitochondrial (356 aa).

A helical membrane pass occupies residues 152–172; it reads VIRFIFLETVAGVPGMVGGML. Residues Glu159, Glu198, and His201 each contribute to the Fe cation site. A helical transmembrane segment spans residues 217 to 237; that stretch reads LMVLGAQGVFFNGFFISYLIS. Fe cation-binding residues include Glu249, Glu304, and His307. Residues 330–356 form a disordered region; it reads YDNPEAPHPTKSAEIVKPTGWERDEVI.

The protein belongs to the alternative oxidase family. It depends on Fe cation as a cofactor.

It is found in the mitochondrion inner membrane. Catalyzes cyanide-resistant oxygen consumption. May increase respiration when the cytochrome respiratory pathway is restricted, or in response to low temperatures. This is Alternative oxidase, mitochondrial (AOX1) from Ajellomyces capsulatus (Darling's disease fungus).